The chain runs to 540 residues: Coatomer subunit delta (540 aa).

The segment at 169-263 (RHEEMLRGKR…GMILGGKSGT (95 aa)) is disordered. The span at 179 to 197 (SGGYTGISGGGGMGSGGMG) shows a compositional bias: gly residues. Over residues 212–229 (NNNNNNNNNNNNNNNNNN) the composition is skewed to low complexity. Residues 238–250 (SPNTSRPSAASSG) are compositionally biased toward polar residues. Positions 251-261 (SQGGMILGGKS) are enriched in gly residues. An MHD domain is found at 304-540 (QEGVHITVEE…TLSVDTYEIK (237 aa)).

Belongs to the adaptor complexes medium subunit family. Delta-COP subfamily. As to quaternary structure, oligomeric complex that consists of at least the alpha, beta, beta', gamma, delta, epsilon and zeta subunits.

Its subcellular location is the cytoplasm. The protein localises to the golgi apparatus membrane. It is found in the cytoplasmic vesicle. The protein resides in the COPI-coated vesicle membrane. Its function is as follows. The coatomer is a cytosolic protein complex that binds to dilysine motifs and reversibly associates with Golgi non-clathrin-coated vesicles, which further mediate biosynthetic protein transport from the ER, via the Golgi up to the trans Golgi network. Coatomer complex is required for budding from Golgi membranes, and is essential for the retrograde Golgi-to-ER transport of dilysine-tagged proteins. The protein is Coatomer subunit delta (copd) of Dictyostelium discoideum (Social amoeba).